Reading from the N-terminus, the 120-residue chain is MDKVYVEGMEFYGYHGVFTEENKLGQRFKVDLTAELDLSKAGQTDDLEQTINYAELYHVCKDIVEGEPVKLVETLAERIAGTVLGKFQPVQQCTVKVIKPDPPIPGHYKSVAIEITRKKS.

Substrate contacts are provided by residues Glu21, Tyr53, and 72 to 73; that span reads VE. Lys99 acts as the Proton donor/acceptor in catalysis.

It belongs to the DHNA family.

The catalysed reaction is 7,8-dihydroneopterin = 6-hydroxymethyl-7,8-dihydropterin + glycolaldehyde. Its pathway is cofactor biosynthesis; tetrahydrofolate biosynthesis; 2-amino-4-hydroxy-6-hydroxymethyl-7,8-dihydropteridine diphosphate from 7,8-dihydroneopterin triphosphate: step 3/4. In terms of biological role, catalyzes the conversion of 7,8-dihydroneopterin to 6-hydroxymethyl-7,8-dihydropterin. The protein is Dihydroneopterin aldolase (folB) of Bacillus subtilis (strain 168).